A 279-amino-acid polypeptide reads, in one-letter code: uncharacterized protein (279 aa).

Belongs to the peptidase C59 family.

This is an uncharacterized protein from Chlorella (PBCV-1).